Consider the following 334-residue polypeptide: Heat-inducible transcription repressor HrcA (334 aa).

The protein belongs to the HrcA family.

In terms of biological role, negative regulator of class I heat shock genes (grpE-dnaK-dnaJ and groELS operons). Prevents heat-shock induction of these operons. The protein is Heat-inducible transcription repressor HrcA of Paracidovorax citrulli (strain AAC00-1) (Acidovorax citrulli).